We begin with the raw amino-acid sequence, 406 residues long: Protein translocase subunit SecD (406 aa).

The next 6 membrane-spanning stretches (helical) occupy residues 8 to 28 (IVIL…NPIN), 240 to 260 (MAAM…YRVA), 262 to 282 (FVAD…MCAI), 289 to 309 (PGIA…VIIF), 334 to 354 (FPAI…LFFF), and 361 to 381 (GFAV…IFIT).

This sequence belongs to the SecD/SecF family. SecD subfamily. Forms a complex with SecF. Part of the essential Sec protein translocation apparatus which comprises SecA, SecYEG and auxiliary proteins SecDF. Other proteins may also be involved.

It localises to the cell inner membrane. Its function is as follows. Part of the Sec protein translocase complex. Interacts with the SecYEG preprotein conducting channel. SecDF uses the proton motive force (PMF) to complete protein translocation after the ATP-dependent function of SecA. The protein is Protein translocase subunit SecD of Sebaldella termitidis (strain ATCC 33386 / NCTC 11300).